Here is a 398-residue protein sequence, read N- to C-terminus: Putative defective protein IntQ (398 aa).

Positions 51-146 constitute a Core-binding (CB) domain; the sequence is LTIKELAEKF…NLNAVFQFGV (96 aa). Positions 167-378 constitute a Tyr recombinase domain; sequence TIPDPLSREE…SENNNAQVAL (212 aa). Residues R202, K236, R331, and H354 contribute to the active site. The O-(3'-phospho-DNA)-tyrosine intermediate role is filled by Y364.

It belongs to the 'phage' integrase family.

Functionally, integrase is necessary for integration of the phage into the host genome by site-specific recombination. In conjunction with excisionase, integrase is also necessary for excision of the prophage from the host genome. This Escherichia coli (strain K12) protein is Putative defective protein IntQ (intQ).